The chain runs to 323 residues: Malate dehydrogenase (323 aa).

Residue 11–17 (GAAGQIA) coordinates NAD(+). Residues Arg92 and Arg98 each contribute to the substrate site. Residues Asn105, Gln112, and 129-131 (VGN) contribute to the NAD(+) site. Residues Asn131 and Arg162 each contribute to the substrate site. His187 serves as the catalytic Proton acceptor.

Belongs to the LDH/MDH superfamily. MDH type 2 family.

The catalysed reaction is (S)-malate + NAD(+) = oxaloacetate + NADH + H(+). Catalyzes the reversible oxidation of malate to oxaloacetate. The sequence is that of Malate dehydrogenase from Corynebacterium efficiens (strain DSM 44549 / YS-314 / AJ 12310 / JCM 11189 / NBRC 100395).